A 479-amino-acid chain; its full sequence is Sulfate adenylyltransferase subunit 1 (479 aa).

The tr-type G domain maps to 25–239 (KSLLRFLTCG…EVLETVDIQR (215 aa)). The tract at residues 34–41 (GSVDDGKS) is G1. 34 to 41 (GSVDDGKS) contacts GTP. The interval 92 to 96 (GITID) is G2. The segment at 113-116 (DTPG) is G3. GTP contacts are provided by residues 113–117 (DTPGH) and 168–171 (NKMD). A G4 region spans residues 168 to 171 (NKMD). The segment at 206 to 208 (SAL) is G5.

The protein belongs to the TRAFAC class translation factor GTPase superfamily. Classic translation factor GTPase family. CysN/NodQ subfamily. As to quaternary structure, heterodimer composed of CysD, the smaller subunit, and CysN.

The enzyme catalyses sulfate + ATP + H(+) = adenosine 5'-phosphosulfate + diphosphate. The protein operates within sulfur metabolism; hydrogen sulfide biosynthesis; sulfite from sulfate: step 1/3. Functionally, with CysD forms the ATP sulfurylase (ATPS) that catalyzes the adenylation of sulfate producing adenosine 5'-phosphosulfate (APS) and diphosphate, the first enzymatic step in sulfur assimilation pathway. APS synthesis involves the formation of a high-energy phosphoric-sulfuric acid anhydride bond driven by GTP hydrolysis by CysN coupled to ATP hydrolysis by CysD. The chain is Sulfate adenylyltransferase subunit 1 from Salmonella newport (strain SL254).